A 309-amino-acid polypeptide reads, in one-letter code: Homoserine O-acetyltransferase (309 aa).

Cys142 functions as the Acyl-thioester intermediate in the catalytic mechanism. Residues Lys163 and Ser192 each contribute to the substrate site. His235 acts as the Proton acceptor in catalysis. Residue Glu237 is part of the active site. Arg249 serves as a coordination point for substrate.

Belongs to the MetA family.

It is found in the cytoplasm. The catalysed reaction is L-homoserine + acetyl-CoA = O-acetyl-L-homoserine + CoA. Its pathway is amino-acid biosynthesis; L-methionine biosynthesis via de novo pathway; O-acetyl-L-homoserine from L-homoserine: step 1/1. In terms of biological role, transfers an acetyl group from acetyl-CoA to L-homoserine, forming acetyl-L-homoserine. The sequence is that of Homoserine O-acetyltransferase from Allorhizobium ampelinum (strain ATCC BAA-846 / DSM 112012 / S4) (Agrobacterium vitis (strain S4)).